We begin with the raw amino-acid sequence, 341 residues long: Mitochondrial protein C2orf69 homolog (341 aa).

A mitochondrion-targeting transit peptide spans 1-35; it reads MLQVVQSPHNLVFMGSIRSVVACLSLAAVARKMTA.

Belongs to the C2orf69 family.

Its subcellular location is the mitochondrion matrix. In terms of biological role, may play a role in the respiratory chain. The chain is Mitochondrial protein C2orf69 homolog from Danio rerio (Zebrafish).